Here is a 122-residue protein sequence, read N- to C-terminus: Holo-[acyl-carrier-protein] synthase (122 aa).

Residues Asp-8 and Glu-58 each contribute to the Mg(2+) site.

This sequence belongs to the P-Pant transferase superfamily. AcpS family. It depends on Mg(2+) as a cofactor.

It localises to the cytoplasm. The enzyme catalyses apo-[ACP] + CoA = holo-[ACP] + adenosine 3',5'-bisphosphate + H(+). Functionally, transfers the 4'-phosphopantetheine moiety from coenzyme A to a Ser of acyl-carrier-protein. The polypeptide is Holo-[acyl-carrier-protein] synthase (Levilactobacillus brevis (strain ATCC 367 / BCRC 12310 / CIP 105137 / JCM 1170 / LMG 11437 / NCIMB 947 / NCTC 947) (Lactobacillus brevis)).